A 610-amino-acid chain; its full sequence is MTDLFDYKEFLKTVTSQPGVYRMYDTAGTVIYVGKAKDLKKRLTSYFRAQVANRKTETLVKNIAQIDVTVTHTETEALLLEHNYIKLYQPRYNVLLRDDKSYPLIFLSADEHPRLAVHRGAKHEKGEYFGPFPNSYAVRETLALLQKLFPVRQCENSVYRNRSRPCLQYQIGRCSGPCVEGLVSEEEYQRQVDYVRLFLSGKDQQVLTQLITRMEEASQQLHFEDAARIRDQIQAVRRVTEQQFVSGDSEDLDVIGVAFDAGLACVHVLFIRLGKVLGSRSYFPKVPAGTELSEVVQTFVGQFYLQGSQGRTLPGEILLDFTLTEKDLLASSLSELAGRKIQIQSRPRGDRARYLKLARTNASTALITRLSQQSTIHQRMKELAKVLKLDEINRMECFDISHTMGEQTVASCVVFDANGPVRSEYRRYNISGITPGDDYAAMAQVLKRRYGKALDDQKIPDVIFIDGGKGQLSQAFDVFASLNVPWDKQKPLLVGVAKGSDRKAGLETLFLASEGEGFSLPPDSPALHLIQHIRDDSHNHAITGHRQRRSKVKNTSALEMIEGVGPKRRQALLKYMGGLQPLFNASVEEIAKVPGISQALAEKIHNALKH.

The region spanning 16–94 is the GIY-YIG domain; sequence SQPGVYRMYD…IKLYQPRYNV (79 aa). Residues 204–239 enclose the UVR domain; it reads QQVLTQLITRMEEASQQLHFEDAARIRDQIQAVRRV.

It belongs to the UvrC family. As to quaternary structure, interacts with UvrB in an incision complex.

It localises to the cytoplasm. Its function is as follows. The UvrABC repair system catalyzes the recognition and processing of DNA lesions. UvrC both incises the 5' and 3' sides of the lesion. The N-terminal half is responsible for the 3' incision and the C-terminal half is responsible for the 5' incision. This is UvrABC system protein C from Yersinia pseudotuberculosis serotype I (strain IP32953).